Here is a 700-residue protein sequence, read N- to C-terminus: Acyl-coenzyme A oxidase 3 (700 aa).

The protein belongs to the acyl-CoA oxidase family. Heteropentamer composed of five different subunits. FAD serves as cofactor.

The protein localises to the peroxisome. The catalysed reaction is a 2,3-saturated acyl-CoA + O2 = a (2E)-enoyl-CoA + H2O2. It participates in lipid metabolism; peroxisomal fatty acid beta-oxidation. Its function is as follows. Oxidizes aliphatic acyl-CoA substrates of different chain lengths such as hexanoyl-CoA, decanoyl-CoA and myristoyl-CoA as well as aromatic/heterocyclic ring-substituted chromogenic substrates, such as furylpropionyl-CoA. Of the above substrates, the efficiency of the enzyme, exhibits the following order: decanoyl-CoA &gt; myristoyl-CoA &gt; hexanoyl-CoA &gt; furyl-propionyl-CoA. This Yarrowia lipolytica (strain CLIB 122 / E 150) (Yeast) protein is Acyl-coenzyme A oxidase 3 (POX3).